Reading from the N-terminus, the 268-residue chain is Tryptophan synthase alpha chain (268 aa).

Residues E49 and D60 each act as proton acceptor in the active site.

This sequence belongs to the TrpA family. In terms of assembly, tetramer of two alpha and two beta chains.

The catalysed reaction is (1S,2R)-1-C-(indol-3-yl)glycerol 3-phosphate + L-serine = D-glyceraldehyde 3-phosphate + L-tryptophan + H2O. The protein operates within amino-acid biosynthesis; L-tryptophan biosynthesis; L-tryptophan from chorismate: step 5/5. Its function is as follows. The alpha subunit is responsible for the aldol cleavage of indoleglycerol phosphate to indole and glyceraldehyde 3-phosphate. This is Tryptophan synthase alpha chain from Haemophilus influenzae (strain PittGG).